The primary structure comprises 338 residues: Anthranilate phosphoribosyltransferase (338 aa).

5-phospho-alpha-D-ribose 1-diphosphate contacts are provided by residues Gly-81, 84-85 (GD), Thr-89, 91-94 (NVST), 109-117 (KHGNRSVSS), and Ser-121. Position 81 (Gly-81) interacts with anthranilate. Ser-93 lines the Mg(2+) pocket. Asn-112 contributes to the anthranilate binding site. Arg-167 serves as a coordination point for anthranilate. Mg(2+) contacts are provided by Asp-226 and Glu-227.

It belongs to the anthranilate phosphoribosyltransferase family. As to quaternary structure, homodimer. Mg(2+) serves as cofactor.

It carries out the reaction N-(5-phospho-beta-D-ribosyl)anthranilate + diphosphate = 5-phospho-alpha-D-ribose 1-diphosphate + anthranilate. Its pathway is amino-acid biosynthesis; L-tryptophan biosynthesis; L-tryptophan from chorismate: step 2/5. Its function is as follows. Catalyzes the transfer of the phosphoribosyl group of 5-phosphorylribose-1-pyrophosphate (PRPP) to anthranilate to yield N-(5'-phosphoribosyl)-anthranilate (PRA). This Alkalilimnicola ehrlichii (strain ATCC BAA-1101 / DSM 17681 / MLHE-1) protein is Anthranilate phosphoribosyltransferase.